The sequence spans 248 residues: Tryptophan synthase alpha chain (248 aa).

Active-site proton acceptor residues include Glu-36 and Asp-47.

The protein belongs to the TrpA family. As to quaternary structure, tetramer of two alpha and two beta chains.

The catalysed reaction is (1S,2R)-1-C-(indol-3-yl)glycerol 3-phosphate + L-serine = D-glyceraldehyde 3-phosphate + L-tryptophan + H2O. Its pathway is amino-acid biosynthesis; L-tryptophan biosynthesis; L-tryptophan from chorismate: step 5/5. Its function is as follows. The alpha subunit is responsible for the aldol cleavage of indoleglycerol phosphate to indole and glyceraldehyde 3-phosphate. The sequence is that of Tryptophan synthase alpha chain from Pyrococcus abyssi (strain GE5 / Orsay).